We begin with the raw amino-acid sequence, 1209 residues long: Limbin (1209 aa).

Residues 1–200 are Extracellular-facing; it reads MKFSKEIEVF…VLPNHGLHAA (200 aa). N120 carries N-linked (GlcNAc...) asparagine glycosylation. A helical transmembrane segment spans residues 201–221; that stretch reads GFCVAFILSLVLTWAVLFFMV. Residues 222–1209 are Cytoplasmic-facing; sequence RYQCVKGSSL…KKAAWALGLN (988 aa). Coiled coils occupy residues 355–394, 553–697, and 920–1012; these read TAECDLETRKKTESQYQREMAAMEEAEEVLKRVSERSAVE, KQKL…EERD, and ELQE…METD. Positions 689–700 are enriched in basic and acidic residues; sequence ERLEGEERDRGQ. Residues 689 to 714 form a disordered region; the sequence is ERLEGEERDRGQEGVQSVRQRLKDDA.

In terms of assembly, component of the EvC complex composed of EFCAB7, IQCE, EVC2 and EVC; built from two subcomplexes, EVC2:EVC and EFCAB7:IQCE. Interacts with EVC. Interacts (via N-terminal end) with EFCAB7. Interacts (via N-terminal end) with IQCE.

The protein resides in the cell membrane. It is found in the cytoplasm. Its subcellular location is the cytoskeleton. It localises to the cilium basal body. The protein localises to the cell projection. The protein resides in the cilium. It is found in the cilium membrane. Its subcellular location is the nucleus. Its function is as follows. Component of the EvC complex that positively regulates ciliary Hedgehog (Hh) signaling. Plays a critical role in bone formation and skeletal development. May be involved in early embryonic morphogenesis. The chain is Limbin (EVC2) from Bos taurus (Bovine).